The chain runs to 270 residues: Release factor glutamine methyltransferase (270 aa).

S-adenosyl-L-methionine is bound by residues G113–G117, D136, and N177. Residue N177–Y180 coordinates substrate.

This sequence belongs to the protein N5-glutamine methyltransferase family. PrmC subfamily.

The enzyme catalyses L-glutaminyl-[peptide chain release factor] + S-adenosyl-L-methionine = N(5)-methyl-L-glutaminyl-[peptide chain release factor] + S-adenosyl-L-homocysteine + H(+). Functionally, methylates the class 1 translation termination release factors RF1/PrfA and RF2/PrfB on the glutamine residue of the universally conserved GGQ motif. This is Release factor glutamine methyltransferase from Lactococcus lactis subsp. lactis (strain IL1403) (Streptococcus lactis).